A 72-amino-acid polypeptide reads, in one-letter code: Gas vesicle protein A (72 aa).

The protein belongs to the gas vesicle GvpA family. In terms of assembly, the gas vesicle shell is 2 nm thick and consists of a single layer of this protein. It forms helical ribs nearly perpendicular to the long axis of the vesicle.

The protein localises to the gas vesicle shell. In terms of biological role, gas vesicles are hollow, gas filled proteinaceous nanostructures found in some microorganisms. During planktonic growth they allow positioning of the organism at a favorable depth for light or nutrient acquisition. GvpA forms the protein shell. The sequence is that of Gas vesicle protein A from Geotalea uraniireducens (strain Rf4) (Geobacter uraniireducens).